The following is a 363-amino-acid chain: Aminomethyltransferase (363 aa).

The protein belongs to the GcvT family. The glycine cleavage system is composed of four proteins: P, T, L and H.

The catalysed reaction is N(6)-[(R)-S(8)-aminomethyldihydrolipoyl]-L-lysyl-[protein] + (6S)-5,6,7,8-tetrahydrofolate = N(6)-[(R)-dihydrolipoyl]-L-lysyl-[protein] + (6R)-5,10-methylene-5,6,7,8-tetrahydrofolate + NH4(+). Its function is as follows. The glycine cleavage system catalyzes the degradation of glycine. The protein is Aminomethyltransferase of Staphylococcus aureus (strain N315).